Reading from the N-terminus, the 431-residue chain is Adenylosuccinate synthetase (431 aa).

GTP-binding positions include 13–19 (GDEGKGK) and 41–43 (GHT). Catalysis depends on Asp-14, which acts as the Proton acceptor. Mg(2+)-binding residues include Asp-14 and Gly-41. IMP-binding positions include 14–17 (DEGK), 39–42 (NAGH), Thr-130, Arg-144, Gln-225, Thr-240, and Arg-304. His-42 (proton donor) is an active-site residue. 300-306 (ATTGRKR) contributes to the substrate binding site. Residues Arg-306, 332–334 (KLD), and 415–417 (STG) contribute to the GTP site.

Belongs to the adenylosuccinate synthetase family. Homodimer. Mg(2+) serves as cofactor.

The protein localises to the cytoplasm. It catalyses the reaction IMP + L-aspartate + GTP = N(6)-(1,2-dicarboxyethyl)-AMP + GDP + phosphate + 2 H(+). It functions in the pathway purine metabolism; AMP biosynthesis via de novo pathway; AMP from IMP: step 1/2. Plays an important role in the de novo pathway of purine nucleotide biosynthesis. Catalyzes the first committed step in the biosynthesis of AMP from IMP. This Shewanella halifaxensis (strain HAW-EB4) protein is Adenylosuccinate synthetase.